The chain runs to 464 residues: CD-NTase-associated protein 4 (464 aa).

Residues 1–228 form an N-terminal endonuclease domain region; sequence MSASLLEKQS…FENFICHALE (228 aa). The interval 229-464 is C-terminal SAVED domain; sequence EDRTQWLSDP…EYMPTAELNI (236 aa).

Belongs to the Cap4 nuclease family. As to quaternary structure, a monomer in the absence of cAAA, in its presence it forms oligomers.

With respect to regulation, DNase activity is activated upon ligand binding. Effector DNase of a CBASS antivirus system. CBASS (cyclic oligonucleotide-based antiphage signaling system) provides immunity against bacteriophage. The CD-NTase protein synthesizes cyclic nucleotides in response to infection; these serve as specific second messenger signals. The signals activate a diverse range of effectors, leading to bacterial cell death and thus abortive phage infection. A type II-C CBASS system. Functionally, probably in the presence of its endogenous cyclic nucleotide (synthesized by the cognate CD-NTase protein in the CBASS operon), or of 2',3',3'-cyclic AMP-AMP-AMP (cAAA) synthesized by Acinetobacter sp. ATCC 27244, endonucleolytically degrades dsDNA in a non-sequence specific manner. It is not activated by other cyclic nucleotides. The chain is CD-NTase-associated protein 4 from Moraxella osloensis.